The sequence spans 717 residues: Fatty acid oxidation complex subunit alpha (717 aa).

An enoyl-CoA hydratase/isomerase region spans residues M1 to A189. D296 lines the substrate pocket. Residues K311–A717 are 3-hydroxyacyl-CoA dehydrogenase. Residues M324, D343, V400 to E402, K407, and S429 each bind NAD(+). H450 (for 3-hydroxyacyl-CoA dehydrogenase activity) is an active-site residue. N453 serves as a coordination point for NAD(+). Substrate is bound by residues N500 and Y660.

In the N-terminal section; belongs to the enoyl-CoA hydratase/isomerase family. It in the C-terminal section; belongs to the 3-hydroxyacyl-CoA dehydrogenase family. In terms of assembly, heterotetramer of two alpha chains (FadB) and two beta chains (FadA).

The enzyme catalyses a (3S)-3-hydroxyacyl-CoA + NAD(+) = a 3-oxoacyl-CoA + NADH + H(+). It carries out the reaction a (3S)-3-hydroxyacyl-CoA = a (2E)-enoyl-CoA + H2O. The catalysed reaction is a 4-saturated-(3S)-3-hydroxyacyl-CoA = a (3E)-enoyl-CoA + H2O. It catalyses the reaction (3S)-3-hydroxybutanoyl-CoA = (3R)-3-hydroxybutanoyl-CoA. The enzyme catalyses a (3Z)-enoyl-CoA = a 4-saturated (2E)-enoyl-CoA. It carries out the reaction a (3E)-enoyl-CoA = a 4-saturated (2E)-enoyl-CoA. The protein operates within lipid metabolism; fatty acid beta-oxidation. Functionally, involved in the aerobic and anaerobic degradation of long-chain fatty acids via beta-oxidation cycle. Catalyzes the formation of 3-oxoacyl-CoA from enoyl-CoA via L-3-hydroxyacyl-CoA. It can also use D-3-hydroxyacyl-CoA and cis-3-enoyl-CoA as substrate. The chain is Fatty acid oxidation complex subunit alpha from Shewanella halifaxensis (strain HAW-EB4).